The following is a 736-amino-acid chain: 3',5'-cyclic-AMP phosphodiesterase 4B (736 aa).

Disordered regions lie at residues 51-77 (QLPP…PTTL) and 96-116 (DVEN…SSSS). Phosphoserine is present on Ser-56. Ser-290 is subject to Phosphoserine. The 330-residue stretch at 330–659 (VNTENEDHLA…NWYQSMIPQS (330 aa)) folds into the PDEase domain. Catalysis depends on His-406, which acts as the Proton donor. His-406 contributes to the 3',5'-cyclic AMP binding site. The AMP site is built by His-406 and His-410. Residues His-410, His-446, Asp-447, and Asp-564 each contribute to the Zn(2+) site. AMP is bound by residues Asp-447, Asp-564, Gln-615, and Phe-618. Asp-447 serves as a coordination point for Mg(2+). Residue Asp-447 participates in Mn(2+) binding. 2 residues coordinate 3',5'-cyclic AMP: Gln-615 and Phe-618. Residues Ser-659 and Ser-661 each carry the phosphoserine modification. A disordered region spans residues 685-736 (EEEDSEGPEKEGEGPNYFSSTKTLCVIDPENRDSLEETDIDIATEDKSLIDT).

It belongs to the cyclic nucleotide phosphodiesterase family. PDE4 subfamily. Interacts with DISC1. Requires Zn(2+) as cofactor. Mg(2+) is required as a cofactor. The cofactor is Mn(2+). As to expression, widely expressed. In terms of tissue distribution, expressed in brain, heart, lung and liver. Expressed in liver and brain.

Its subcellular location is the cytoplasm. It localises to the cell membrane. It catalyses the reaction 3',5'-cyclic AMP + H2O = AMP + H(+). The protein operates within purine metabolism; 3',5'-cyclic AMP degradation; AMP from 3',5'-cyclic AMP: step 1/1. Inhibited by rolipram. Functionally, hydrolyzes the second messenger cAMP, which is a key regulator of many important physiological processes. This chain is 3',5'-cyclic-AMP phosphodiesterase 4B, found in Rattus norvegicus (Rat).